A 236-amino-acid chain; its full sequence is DNA repair and recombination protein RadB (236 aa).

It belongs to the eukaryotic RecA-like protein family. RadB subfamily.

Involved in DNA repair and in homologous recombination. May regulate the cleavage reactions of the branch-structured DNA. Has a very weak ATPase activity that is not stimulated by DNA. Binds DNA but does not promote DNA strands exchange. This Halobacterium salinarum (strain ATCC 29341 / DSM 671 / R1) protein is DNA repair and recombination protein RadB.